The sequence spans 307 residues: Nodulation protein NoeC (307 aa).

The next 8 helical transmembrane spans lie at 46–66 (APLW…YVLN), 91–111 (SGLT…VCAI), 117–137 (LFAI…KVRG), 140–160 (VLDL…GATA), 163–183 (IPVP…LASI), 212–232 (IVAL…ELFV), 238–258 (AQGP…AYWI), and 279–299 (VTDG…VFLM).

The protein localises to the cell membrane. The protein is Nodulation protein NoeC (noeC) of Azorhizobium caulinodans (strain ATCC 43989 / DSM 5975 / JCM 20966 / LMG 6465 / NBRC 14845 / NCIMB 13405 / ORS 571).